The primary structure comprises 192 residues: MNSKFILKYFILAFFLVSCQTYQIAYDRFSQVLDSQYDIGVNYSRDGIFKSVISIKYDKLKNKREYFILVRVESRNSSQIKPEKIITDTRFEAKGELVSEDSKRVVYYNDFYDSYFPYDYTTVITEKNIKVEIYKFIISESEFIRFVALGNDNIAAFRIYAFRNDVIVSFNKIPFKKFLDDFNSKVKLLGGS.

The first 18 residues, 1–18 (MNSKFILKYFILAFFLVS), serve as a signal peptide directing secretion. C19 carries the N-palmitoyl cysteine lipid modification. Residue C19 is the site of S-diacylglycerol cysteine attachment.

Its subcellular location is the cell membrane. This is an uncharacterized protein from Borreliella burgdorferi (strain ATCC 35210 / DSM 4680 / CIP 102532 / B31) (Borrelia burgdorferi).